We begin with the raw amino-acid sequence, 111 residues long: X antigen family member 3 (111 aa).

The tract at residues 1–111 (MIWRGRSTYR…PEGGDRQPQV (111 aa)) is disordered. Acidic residues predominate over residues 29–40 (PGDEEPQQEEPP). Basic and acidic residues predominate over residues 97 to 111 (EQFKMPEGGDRQPQV).

Belongs to the GAGE family.

In Homo sapiens (Human), this protein is X antigen family member 3 (XAGE3).